Consider the following 597-residue polypeptide: Gigaxonin (597 aa).

Residues 30 to 99 (CDAHLVLDGE…IFSGQIRLNE (70 aa)) enclose the BTB domain. The 103-residue stretch at 134–236 (CIGIRDFALH…DSSYLREQML (103 aa)) folds into the BACK domain. Kelch repeat units follow at residues 274-326 (CIVT…SAEG), 327-374 (FLFV…EIDG), 376-421 (LYIL…AMKK), 422-468 (KIYA…GVAM), 470-522 (LYVF…VYGA), and 528-574 (SIYV…AALR).

Interacts with TBCB. Interacts with CUL3. Part of a complex that contains CUL3, RBX1 and GAN. Interacts (via BTB domain) with UBA1. Interacts (via Kelch domains) with MAP1B (via C-terminus) and MAP1S (via C-terminus). In terms of processing, ubiquitinated by E3 ubiquitin ligase complex formed by CUL3 and RBX1 and probably targeted for proteasome-independent degradation. As to expression, expressed in brain, heart and muscle (at protein level).

The protein resides in the cytoplasm. It localises to the cytoskeleton. The protein operates within protein modification; protein ubiquitination. Probable cytoskeletal component that directly or indirectly plays an important role in neurofilament architecture. May act as a substrate-specific adapter of an E3 ubiquitin-protein ligase complex which mediates the ubiquitination and subsequent proteasomal degradation of target proteins. Controls degradation of TBCB. Controls degradation of MAP1B and MAP1S, and is critical for neuronal maintenance and survival. This chain is Gigaxonin, found in Mus musculus (Mouse).